The following is a 612-amino-acid chain: RNA polymerase sigma factor RpoD (612 aa).

The segment covering 191–206 (QQNNEEDEENNQEDHE) has biased composition (acidic residues). The interval 191–210 (QQNNEEDEENNQEDHEDDHS) is disordered. Positions 378-448 (MVEANLRLVI…TRSIADQART (71 aa)) are sigma-70 factor domain-2. The Interaction with polymerase core subunit RpoC motif lies at 402–405 (DLIQ). The interval 457-533 (ETINKLNRIS…DTTLELPLDS (77 aa)) is sigma-70 factor domain-3. Positions 546 to 599 (VLSGLTAREAKVLRMRFGIDMNTDHTLEEVGKQFDVTRERIRQIEAKALRKLRH) are sigma-70 factor domain-4. Residues 572–591 (LEEVGKQFDVTRERIRQIEA) constitute a DNA-binding region (H-T-H motif).

Belongs to the sigma-70 factor family. RpoD/SigA subfamily. As to quaternary structure, interacts transiently with the RNA polymerase catalytic core.

Its subcellular location is the cytoplasm. Its function is as follows. Sigma factors are initiation factors that promote the attachment of RNA polymerase to specific initiation sites and are then released. This sigma factor is the primary sigma factor during exponential growth. This chain is RNA polymerase sigma factor RpoD, found in Buchnera aphidicola subsp. Acyrthosiphon pisum (strain APS) (Acyrthosiphon pisum symbiotic bacterium).